The chain runs to 426 residues: NADH-quinone oxidoreductase subunit D 1 (426 aa).

The disordered stretch occupies residues 1–51 (MATEFTVPDSAARIATAQQAGGGTPVRSGPPDEGGEFSGDRMSLSMGPSHP).

This sequence belongs to the complex I 49 kDa subunit family. In terms of assembly, NDH-1 is composed of 14 different subunits. Subunits NuoB, C, D, E, F, and G constitute the peripheral sector of the complex.

The protein resides in the cell inner membrane. The enzyme catalyses a quinone + NADH + 5 H(+)(in) = a quinol + NAD(+) + 4 H(+)(out). NDH-1 shuttles electrons from NADH, via FMN and iron-sulfur (Fe-S) centers, to quinones in the respiratory chain. The immediate electron acceptor for the enzyme in this species is believed to be ubiquinone. Couples the redox reaction to proton translocation (for every two electrons transferred, four hydrogen ions are translocated across the cytoplasmic membrane), and thus conserves the redox energy in a proton gradient. The protein is NADH-quinone oxidoreductase subunit D 1 of Opitutus terrae (strain DSM 11246 / JCM 15787 / PB90-1).